A 705-amino-acid chain; its full sequence is Ribonuclease R (705 aa).

Residues 240–567 (RRDLREQLCF…VHRLLKKALR (328 aa)) form the RNB domain. An S1 motif domain is found at 615-696 (GEEFIGIITG…ERARVEFELI (82 aa)).

It belongs to the RNR ribonuclease family. RNase R subfamily.

The protein localises to the cytoplasm. It carries out the reaction Exonucleolytic cleavage in the 3'- to 5'-direction to yield nucleoside 5'-phosphates.. Functionally, 3'-5' exoribonuclease that releases 5'-nucleoside monophosphates and is involved in maturation of structured RNAs. The chain is Ribonuclease R from Aquifex aeolicus (strain VF5).